The chain runs to 173 residues: Crossover junction endodeoxyribonuclease RuvC (173 aa).

Catalysis depends on residues Asp11, Glu71, and Asp143. Mg(2+) contacts are provided by Asp11, Glu71, and Asp143.

The protein belongs to the RuvC family. In terms of assembly, homodimer which binds Holliday junction (HJ) DNA. The HJ becomes 2-fold symmetrical on binding to RuvC with unstacked arms; it has a different conformation from HJ DNA in complex with RuvA. In the full resolvosome a probable DNA-RuvA(4)-RuvB(12)-RuvC(2) complex forms which resolves the HJ. The cofactor is Mg(2+).

The protein localises to the cytoplasm. It catalyses the reaction Endonucleolytic cleavage at a junction such as a reciprocal single-stranded crossover between two homologous DNA duplexes (Holliday junction).. Functionally, the RuvA-RuvB-RuvC complex processes Holliday junction (HJ) DNA during genetic recombination and DNA repair. Endonuclease that resolves HJ intermediates. Cleaves cruciform DNA by making single-stranded nicks across the HJ at symmetrical positions within the homologous arms, yielding a 5'-phosphate and a 3'-hydroxyl group; requires a central core of homology in the junction. The consensus cleavage sequence is 5'-(A/T)TT(C/G)-3'. Cleavage occurs on the 3'-side of the TT dinucleotide at the point of strand exchange. HJ branch migration catalyzed by RuvA-RuvB allows RuvC to scan DNA until it finds its consensus sequence, where it cleaves and resolves the cruciform DNA. The sequence is that of Crossover junction endodeoxyribonuclease RuvC from Brucella suis (strain ATCC 23445 / NCTC 10510).